The primary structure comprises 372 residues: Transaldolase 2 (372 aa).

Residue K140 is the Schiff-base intermediate with substrate of the active site.

Belongs to the transaldolase family. Type 2 subfamily.

The protein localises to the cytoplasm. It catalyses the reaction D-sedoheptulose 7-phosphate + D-glyceraldehyde 3-phosphate = D-erythrose 4-phosphate + beta-D-fructose 6-phosphate. It participates in carbohydrate degradation; pentose phosphate pathway; D-glyceraldehyde 3-phosphate and beta-D-fructose 6-phosphate from D-ribose 5-phosphate and D-xylulose 5-phosphate (non-oxidative stage): step 2/3. In terms of biological role, transaldolase is important for the balance of metabolites in the pentose-phosphate pathway. The chain is Transaldolase 2 from Streptomyces coelicolor (strain ATCC BAA-471 / A3(2) / M145).